A 240-amino-acid polypeptide reads, in one-letter code: MKVVITRPKERADVFASLLKKEGFEPIIFPTLEIVYNKDLDVNLDSYDWIAFTSPSGVIGLYNILTENERENVKNKKIAVIGEKTAKTFKKYFGRDPDIMPNEYTAESLLREIKKVSKEEEKFLIPTTPSTRDVLKNNLNADLLFVYKSAEPENLKEDIKKLKELIAKDKFILTFTSGLTAKNFFKYVDDEFAEIIKDNYIVAIGPITAKVIEKFGFKPLIPKVYTIEGMLEVIRTLKER.

It belongs to the uroporphyrinogen-III synthase family.

It catalyses the reaction hydroxymethylbilane = uroporphyrinogen III + H2O. The protein operates within porphyrin-containing compound metabolism; protoporphyrin-IX biosynthesis; coproporphyrinogen-III from 5-aminolevulinate: step 3/4. Its function is as follows. Catalyzes cyclization of the linear tetrapyrrole, hydroxymethylbilane, to the macrocyclic uroporphyrinogen III. This is Putative uroporphyrinogen-III synthase (hemD) from Methanocaldococcus jannaschii (strain ATCC 43067 / DSM 2661 / JAL-1 / JCM 10045 / NBRC 100440) (Methanococcus jannaschii).